The sequence spans 285 residues: Polyamine aminopropyltransferase (285 aa).

One can recognise a PABS domain in the interval 5 to 241; that stretch reads QDWFTESYPD…GWWSATMAGK (237 aa). Gln-35 is a binding site for S-methyl-5'-thioadenosine. Spermidine contacts are provided by His-66 and Asp-90. S-methyl-5'-thioadenosine-binding positions include Asp-110 and 141-142; that span reads DG. Asp-160 functions as the Proton acceptor in the catalytic mechanism. Spermidine is bound at residue 160-163; sequence DSTD. Pro-167 contributes to the S-methyl-5'-thioadenosine binding site.

This sequence belongs to the spermidine/spermine synthase family. As to quaternary structure, homodimer or homotetramer.

The protein localises to the cytoplasm. The enzyme catalyses S-adenosyl 3-(methylsulfanyl)propylamine + putrescine = S-methyl-5'-thioadenosine + spermidine + H(+). It functions in the pathway amine and polyamine biosynthesis; spermidine biosynthesis; spermidine from putrescine: step 1/1. Catalyzes the irreversible transfer of a propylamine group from the amino donor S-adenosylmethioninamine (decarboxy-AdoMet) to putrescine (1,4-diaminobutane) to yield spermidine. The polypeptide is Polyamine aminopropyltransferase (Methylococcus capsulatus (strain ATCC 33009 / NCIMB 11132 / Bath)).